We begin with the raw amino-acid sequence, 496 residues long: Glycerol kinase (496 aa).

Residue Thr12 participates in ADP binding. Residues Thr12, Thr13, and Ser14 each coordinate ATP. Sn-glycerol 3-phosphate is bound at residue Thr12. Arg16 is an ADP binding site. Arg82, Glu83, and Tyr134 together coordinate sn-glycerol 3-phosphate. 3 residues coordinate glycerol: Arg82, Glu83, and Tyr134. His230 carries the phosphohistidine; by HPr modification. Residue Asp244 coordinates sn-glycerol 3-phosphate. Glycerol-binding residues include Asp244 and Gln245. Residues Thr266 and Gly309 each contribute to the ADP site. Positions 266, 309, 313, and 410 each coordinate ATP. ADP contacts are provided by Gly410 and Asn414.

Belongs to the FGGY kinase family. In terms of assembly, homotetramer and homodimer (in equilibrium). The phosphoenolpyruvate-dependent sugar phosphotransferase system (PTS), including enzyme I, and histidine-containing protein (HPr) are required for the phosphorylation, which leads to the activation of the enzyme.

The enzyme catalyses glycerol + ATP = sn-glycerol 3-phosphate + ADP + H(+). It participates in polyol metabolism; glycerol degradation via glycerol kinase pathway; sn-glycerol 3-phosphate from glycerol: step 1/1. With respect to regulation, activated by phosphorylation and inhibited by fructose 1,6-bisphosphate (FBP). Key enzyme in the regulation of glycerol uptake and metabolism. Catalyzes the phosphorylation of glycerol to yield sn-glycerol 3-phosphate. The sequence is that of Glycerol kinase from Bacillus cytotoxicus (strain DSM 22905 / CIP 110041 / 391-98 / NVH 391-98).